A 406-amino-acid chain; its full sequence is Acetate kinase (406 aa).

Residue N7 participates in Mg(2+) binding. K14 is a binding site for ATP. Residue R90 coordinates substrate. D147 functions as the Proton donor/acceptor in the catalytic mechanism. ATP contacts are provided by residues 207 to 211 (HLGNG), 283 to 285 (DMR), and 331 to 335 (GVGEN). Position 385 (E385) interacts with Mg(2+).

It belongs to the acetokinase family. As to quaternary structure, homodimer. Mg(2+) serves as cofactor. The cofactor is Mn(2+).

It localises to the cytoplasm. The enzyme catalyses acetate + ATP = acetyl phosphate + ADP. Its pathway is metabolic intermediate biosynthesis; acetyl-CoA biosynthesis; acetyl-CoA from acetate: step 1/2. Functionally, catalyzes the formation of acetyl phosphate from acetate and ATP. Can also catalyze the reverse reaction. The sequence is that of Acetate kinase from Fervidobacterium nodosum (strain ATCC 35602 / DSM 5306 / Rt17-B1).